Reading from the N-terminus, the 408-residue chain is S-adenosylmethionine sensor upstream of mTORC1 (408 aa).

A compositionally biased stretch (low complexity) spans 1–16 (MEAAPRSRPRPGGAAA). The disordered stretch occupies residues 1 to 37 (MEAAPRSRPRPGGAAASPPPPPPPPPPEQERKLEQEK). A compositionally biased stretch (pro residues) spans 17–27 (SPPPPPPPPPP). The span at 28-37 (EQERKLEQEK) shows a compositional bias: basic and acidic residues. Arg-97, Gly-175, Asp-193, Asp-205, Phe-206, and Ser-247 together coordinate S-adenosyl-L-methionine.

This sequence belongs to the BMT2/SAMTOR family. As to quaternary structure, interacts with the GATOR1 complex; interaction is disrupted when SAMTOR binds S-adenosyl-L-methionine. Interacts with the KICSTOR complex; interaction is disrupted when SAMTOR binds S-adenosyl-L-methionine.

S-adenosyl-L-methionine-binding protein that acts as an inhibitor of mTORC1 signaling via interaction with the GATOR1 and KICSTOR complexes. Acts as a sensor of S-adenosyl-L-methionine to signal methionine sufficiency to mTORC1: in presence of methionine, binds S-adenosyl-L-methionine, leading to disrupt interaction with the GATOR1 and KICSTOR complexes and promote mTORC1 signaling. Upon methionine starvation, S-adenosyl-L-methionine levels are reduced, thereby promoting the association with GATOR1 and KICSTOR, leading to inhibit mTORC1 signaling. Probably also acts as a S-adenosyl-L-methionine-dependent methyltransferase. The sequence is that of S-adenosylmethionine sensor upstream of mTORC1 from Gallus gallus (Chicken).